The primary structure comprises 117 residues: Large ribosomal subunit protein bL20 (117 aa).

This sequence belongs to the bacterial ribosomal protein bL20 family.

In terms of biological role, binds directly to 23S ribosomal RNA and is necessary for the in vitro assembly process of the 50S ribosomal subunit. It is not involved in the protein synthesizing functions of that subunit. In Acetivibrio thermocellus (strain ATCC 27405 / DSM 1237 / JCM 9322 / NBRC 103400 / NCIMB 10682 / NRRL B-4536 / VPI 7372) (Clostridium thermocellum), this protein is Large ribosomal subunit protein bL20.